The primary structure comprises 398 residues: Glutamyl-tRNA reductase (398 aa).

Substrate contacts are provided by residues 45 to 48 (TCNR), Ser-88, 93 to 95 (EDQ), and Gln-99. The active-site Nucleophile is Cys-46. 168 to 173 (GAGKMG) contributes to the NADP(+) binding site.

This sequence belongs to the glutamyl-tRNA reductase family. As to quaternary structure, homodimer.

The enzyme catalyses (S)-4-amino-5-oxopentanoate + tRNA(Glu) + NADP(+) = L-glutamyl-tRNA(Glu) + NADPH + H(+). Its pathway is porphyrin-containing compound metabolism; protoporphyrin-IX biosynthesis; 5-aminolevulinate from L-glutamyl-tRNA(Glu): step 1/2. Catalyzes the NADPH-dependent reduction of glutamyl-tRNA(Glu) to glutamate 1-semialdehyde (GSA). In Methanothermobacter marburgensis (strain ATCC BAA-927 / DSM 2133 / JCM 14651 / NBRC 100331 / OCM 82 / Marburg) (Methanobacterium thermoautotrophicum), this protein is Glutamyl-tRNA reductase (hemA).